A 283-amino-acid polypeptide reads, in one-letter code: Acetylglutamate kinase (283 aa).

Substrate is bound by residues 63–64, Arg85, and Asn178; that span reads GG.

The protein belongs to the acetylglutamate kinase family. ArgB subfamily.

It localises to the cytoplasm. The enzyme catalyses N-acetyl-L-glutamate + ATP = N-acetyl-L-glutamyl 5-phosphate + ADP. The protein operates within amino-acid biosynthesis; L-arginine biosynthesis; N(2)-acetyl-L-ornithine from L-glutamate: step 2/4. In terms of biological role, catalyzes the ATP-dependent phosphorylation of N-acetyl-L-glutamate. In Prochlorococcus marinus (strain MIT 9312), this protein is Acetylglutamate kinase.